Consider the following 322-residue polypeptide: Ferrochelatase (322 aa).

2 residues coordinate Fe cation: His-195 and Glu-276.

This sequence belongs to the ferrochelatase family.

Its subcellular location is the cytoplasm. It carries out the reaction heme b + 2 H(+) = protoporphyrin IX + Fe(2+). It functions in the pathway porphyrin-containing compound metabolism; protoheme biosynthesis; protoheme from protoporphyrin-IX: step 1/1. Catalyzes the ferrous insertion into protoporphyrin IX. This chain is Ferrochelatase, found in Edwardsiella ictaluri (strain 93-146).